A 445-amino-acid polypeptide reads, in one-letter code: N-succinylarginine dihydrolase (445 aa).

Substrate is bound by residues alanine 19 to serine 28, asparagine 110, and histidine 137 to arginine 138. Glutamate 174 is an active-site residue. Arginine 214 serves as a coordination point for substrate. Histidine 250 is an active-site residue. 2 residues coordinate substrate: aspartate 252 and asparagine 363. Catalysis depends on cysteine 369, which acts as the Nucleophile.

The protein belongs to the succinylarginine dihydrolase family. In terms of assembly, homodimer.

The enzyme catalyses N(2)-succinyl-L-arginine + 2 H2O + 2 H(+) = N(2)-succinyl-L-ornithine + 2 NH4(+) + CO2. The protein operates within amino-acid degradation; L-arginine degradation via AST pathway; L-glutamate and succinate from L-arginine: step 2/5. In terms of biological role, catalyzes the hydrolysis of N(2)-succinylarginine into N(2)-succinylornithine, ammonia and CO(2). In Shewanella sediminis (strain HAW-EB3), this protein is N-succinylarginine dihydrolase.